Here is a 511-residue protein sequence, read N- to C-terminus: Bifunctional purine biosynthesis protein PurH (511 aa).

The region spanning 1–145 (MKKRALVSVS…KNHKFVSVIV (145 aa)) is the MGS-like domain.

This sequence belongs to the PurH family.

The catalysed reaction is (6R)-10-formyltetrahydrofolate + 5-amino-1-(5-phospho-beta-D-ribosyl)imidazole-4-carboxamide = 5-formamido-1-(5-phospho-D-ribosyl)imidazole-4-carboxamide + (6S)-5,6,7,8-tetrahydrofolate. The enzyme catalyses IMP + H2O = 5-formamido-1-(5-phospho-D-ribosyl)imidazole-4-carboxamide. Its pathway is purine metabolism; IMP biosynthesis via de novo pathway; 5-formamido-1-(5-phospho-D-ribosyl)imidazole-4-carboxamide from 5-amino-1-(5-phospho-D-ribosyl)imidazole-4-carboxamide (10-formyl THF route): step 1/1. It participates in purine metabolism; IMP biosynthesis via de novo pathway; IMP from 5-formamido-1-(5-phospho-D-ribosyl)imidazole-4-carboxamide: step 1/1. The polypeptide is Bifunctional purine biosynthesis protein PurH (Bacillus thuringiensis subsp. konkukian (strain 97-27)).